We begin with the raw amino-acid sequence, 527 residues long: Arginine--tRNA ligase (527 aa).

Positions 112 to 122 (ANPTGPLHIGH) match the 'HIGH' region motif.

Belongs to the class-I aminoacyl-tRNA synthetase family. Monomer.

It is found in the cytoplasm. It carries out the reaction tRNA(Arg) + L-arginine + ATP = L-arginyl-tRNA(Arg) + AMP + diphosphate. In Nitratiruptor sp. (strain SB155-2), this protein is Arginine--tRNA ligase.